The sequence spans 383 residues: 8-amino-7-oxononanoate synthase (383 aa).

Substrate is bound at residue arginine 22. Residue 109-110 (GF) participates in pyridoxal 5'-phosphate binding. Histidine 134 is a substrate binding site. Residues serine 178, histidine 206, and threonine 232 each coordinate pyridoxal 5'-phosphate. At lysine 235 the chain carries N6-(pyridoxal phosphate)lysine. Threonine 348 lines the substrate pocket.

It belongs to the class-II pyridoxal-phosphate-dependent aminotransferase family. BioF subfamily. As to quaternary structure, homodimer. Pyridoxal 5'-phosphate is required as a cofactor.

The enzyme catalyses 6-carboxyhexanoyl-[ACP] + L-alanine + H(+) = (8S)-8-amino-7-oxononanoate + holo-[ACP] + CO2. It functions in the pathway cofactor biosynthesis; biotin biosynthesis. Its function is as follows. Catalyzes the decarboxylative condensation of pimeloyl-[acyl-carrier protein] and L-alanine to produce 8-amino-7-oxononanoate (AON), [acyl-carrier protein], and carbon dioxide. The sequence is that of 8-amino-7-oxononanoate synthase from Vibrio parahaemolyticus serotype O3:K6 (strain RIMD 2210633).